A 503-amino-acid chain; its full sequence is von Willebrand factor A domain-containing protein 1 (503 aa).

The N-terminal stretch at 1-21 (MEVRKALTCVFLTVFLCSGDA) is a signal peptide. The region spanning 36–213 (DVLFLLDSSG…IIGEDLRNSI (178 aa)) is the VWFA domain. Fibronectin type-III domains are found at residues 218-324 (RAER…TVNP) and 331-423 (LLSS…VLPA).

As to quaternary structure, homodimer or homomultimer; disulfide-linked.

The protein localises to the secreted. It localises to the extracellular space. It is found in the extracellular matrix. The protein resides in the basement membrane. Functionally, promotes matrix assembly. Involved in the organization of skeletal muscles and in the formation of neuromuscular junctions. This is von Willebrand factor A domain-containing protein 1 from Danio rerio (Zebrafish).